A 1119-amino-acid polypeptide reads, in one-letter code: Transcriptional repressor NF-X1 homolog (1119 aa).

A disordered region spans residues 1–214 (MADTEGTSSS…EPLTEEETKI (214 aa)). The segment covering 7–17 (TSSSIPTSTNS) has biased composition (low complexity). Positions 18–29 (SRHRASRGRGGR) are enriched in basic residues. Residues 84–98 (ANFTFNPNAATFNPA) show a composition bias toward low complexity. Residues 113-128 (GASTHSNQNSRQQEPS) show a composition bias toward polar residues. The segment covering 143 to 154 (RQLEIQEQRGDS) has biased composition (basic and acidic residues). Over residues 157–167 (QNQSRQNNRNQ) the composition is skewed to low complexity. The span at 174–193 (ANQQNKSVQNPSRNPGNSRR) shows a compositional bias: polar residues. Positions 198–214 (RRREQKEEPLTEEETKI) are enriched in basic and acidic residues. The RING-type; degenerate zinc-finger motif lies at 235 to 287 (CAICYTRITTRQGVWSCKTCYHIFHISTGCITDWARSSRDKEGANTWRCPTCQ). 9 NF-X1-type zinc fingers span residues 330–348 (CPHP…ECKL), 383–402 (CGQH…ECTV), 439–458 (CGIH…ECET), 500–523 (CGTP…PCNL), 565–584 (CGMH…FCLQ), 592–611 (CGIH…PCLQ), 649–668 (CDHS…PCTQ), 703–726 (CGVH…KCTK), and 735–756 (CEHP…PCKA). In terms of domain architecture, R3H spans 867–937 (IDFVKSVEKI…KRSIVLTAVR (71 aa)). Disordered regions lie at residues 1024 to 1047 (VDSD…PKDW) and 1078 to 1119 (AAKK…ELLE). Polar residues predominate over residues 1032-1041 (NVPTTSNLVS). The span at 1086–1097 (PTWEDQCDEDAP) shows a compositional bias: acidic residues.

Belongs to the NFX1 family.

It is found in the nucleus. Functionally, may play a role in transcription regulation. The protein is Transcriptional repressor NF-X1 homolog (nfx-1) of Caenorhabditis elegans.